The chain runs to 152 residues: SsrA-binding protein (152 aa).

It belongs to the SmpB family.

It is found in the cytoplasm. Required for rescue of stalled ribosomes mediated by trans-translation. Binds to transfer-messenger RNA (tmRNA), required for stable association of tmRNA with ribosomes. tmRNA and SmpB together mimic tRNA shape, replacing the anticodon stem-loop with SmpB. tmRNA is encoded by the ssrA gene; the 2 termini fold to resemble tRNA(Ala) and it encodes a 'tag peptide', a short internal open reading frame. During trans-translation Ala-aminoacylated tmRNA acts like a tRNA, entering the A-site of stalled ribosomes, displacing the stalled mRNA. The ribosome then switches to translate the ORF on the tmRNA; the nascent peptide is terminated with the 'tag peptide' encoded by the tmRNA and targeted for degradation. The ribosome is freed to recommence translation, which seems to be the essential function of trans-translation. The sequence is that of SsrA-binding protein from Rickettsia prowazekii (strain Madrid E).